Here is a 154-residue protein sequence, read N- to C-terminus: Snaclec EMS16 subunit beta (154 aa).

Residues Met-1–Cys-26 form the signal peptide. Residues Cys-27 and Cys-38 are joined by a disulfide bond. Residues Phe-34–Lys-147 enclose the C-type lectin domain. Asn-47 is a glycosylation site (N-linked (GlcNAc...) asparagine). 2 disulfide bridges follow: Cys-55-Cys-146 and Cys-121-Cys-138.

The protein belongs to the snaclec family. In terms of assembly, heterodimer of subunits A and B; disulfide-linked. As to expression, expressed by the venom gland.

It localises to the secreted. Functionally, EMS16 is a potent and selective inhibitor of alpha-2/beta-1 (ITGA2/ITGB1) integrin and acts as a potent antagonist of platelet aggregation and cell migration. Binds specifically to the I domain of the alpha-2 subunit, in a metal ion-independent fashion. In Echis multisquamatus (Central Asian sand viper), this protein is Snaclec EMS16 subunit beta.